A 212-amino-acid polypeptide reads, in one-letter code: Large ribosomal subunit protein bL25 (212 aa).

A disordered region spans residues 183 to 212; the sequence is HDLPVASIHKPKGAKADDAEGEEGEEGGEE. The segment covering 201–212 has biased composition (acidic residues); it reads AEGEEGEEGGEE.

Belongs to the bacterial ribosomal protein bL25 family. CTC subfamily. Part of the 50S ribosomal subunit; part of the 5S rRNA/L5/L18/L25 subcomplex. Contacts the 5S rRNA. Binds to the 5S rRNA independently of L5 and L18.

Functionally, this is one of the proteins that binds to the 5S RNA in the ribosome where it forms part of the central protuberance. The protein is Large ribosomal subunit protein bL25 of Marinobacter nauticus (strain ATCC 700491 / DSM 11845 / VT8) (Marinobacter aquaeolei).